The chain runs to 351 residues: Ion-translocating oxidoreductase complex subunit D (351 aa).

The next 4 membrane-spanning stretches (helical) occupy residues 18–38 (IMLL…YFFG), 42–62 (LIQV…VLHL), 87–107 (LPPL…IIIA), and 121–141 (PAMV…TSWL). FMN phosphoryl threonine is present on threonine 185. A run of 5 helical transmembrane segments spans residues 212 to 232 (LAGI…LLLL), 241 to 261 (IPVS…MIAP), 264 to 284 (FAPP…FFIA), 298 to 318 (LIFG…GGYP), and 320 to 340 (GVAF…HYTQ).

The protein belongs to the NqrB/RnfD family. In terms of assembly, the complex is composed of six subunits: RnfA, RnfB, RnfC, RnfD, RnfE and RnfG. FMN serves as cofactor.

It is found in the cell inner membrane. Functionally, part of a membrane-bound complex that couples electron transfer with translocation of ions across the membrane. In Yersinia enterocolitica serotype O:8 / biotype 1B (strain NCTC 13174 / 8081), this protein is Ion-translocating oxidoreductase complex subunit D.